A 441-amino-acid polypeptide reads, in one-letter code: tRNA-2-methylthio-N(6)-dimethylallyladenosine synthase (441 aa).

The MTTase N-terminal domain maps to 5-121; the sequence is KKLFIKTYGC…LPQMEARLRE (117 aa). [4Fe-4S] cluster-binding residues include Cys14, Cys50, Cys84, Cys159, Cys163, and Cys166. The 236-residue stretch at 145-380 folds into the Radical SAM core domain; that stretch reads ARRAPSAFLT…TRQQQDIQQS (236 aa). In terms of domain architecture, TRAM spans 379-441; sequence QSMVGRDVSV…RNSLAAVTLA (63 aa).

The protein belongs to the methylthiotransferase family. MiaB subfamily. Monomer. The cofactor is [4Fe-4S] cluster.

The protein resides in the cytoplasm. It catalyses the reaction N(6)-dimethylallyladenosine(37) in tRNA + (sulfur carrier)-SH + AH2 + 2 S-adenosyl-L-methionine = 2-methylsulfanyl-N(6)-dimethylallyladenosine(37) in tRNA + (sulfur carrier)-H + 5'-deoxyadenosine + L-methionine + A + S-adenosyl-L-homocysteine + 2 H(+). Its function is as follows. Catalyzes the methylthiolation of N6-(dimethylallyl)adenosine (i(6)A), leading to the formation of 2-methylthio-N6-(dimethylallyl)adenosine (ms(2)i(6)A) at position 37 in tRNAs that read codons beginning with uridine. The polypeptide is tRNA-2-methylthio-N(6)-dimethylallyladenosine synthase (Roseobacter denitrificans (strain ATCC 33942 / OCh 114) (Erythrobacter sp. (strain OCh 114))).